A 350-amino-acid chain; its full sequence is DNA primase small subunit PriS (350 aa).

Active-site residues include aspartate 97, aspartate 99, and aspartate 251.

Belongs to the eukaryotic-type primase small subunit family. Heterodimer of a small subunit (PriS) and a large subunit (PriL). Mg(2+) serves as cofactor. Mn(2+) is required as a cofactor. It depends on Zn(2+) as a cofactor.

In terms of biological role, catalytic subunit of DNA primase, an RNA polymerase that catalyzes the synthesis of short RNA molecules used as primers for DNA polymerase during DNA replication. The small subunit contains the primase catalytic core and has DNA synthesis activity on its own. Binding to the large subunit stabilizes and modulates the activity, increasing the rate of DNA synthesis while decreasing the length of the DNA fragments, and conferring RNA synthesis capability. The DNA polymerase activity may enable DNA primase to also catalyze primer extension after primer synthesis. May also play a role in DNA repair. The chain is DNA primase small subunit PriS from Methanocaldococcus jannaschii (strain ATCC 43067 / DSM 2661 / JAL-1 / JCM 10045 / NBRC 100440) (Methanococcus jannaschii).